We begin with the raw amino-acid sequence, 396 residues long: MAKAKFERNKPHCNIGTIGHVDHGKTTLTAAITKVLAEQGGAEFTDYANIDKAPEERERGITISTAHVEYETANRHYAHVDCPGHADYVKNMITGAAQMDGAILVVNAADGPMPQTREHILLARQVGVPALVVYMNKVDQVDDEEILELVELEVRELLSSYDFPGDDIPIVKGSALAALEGRDDNIGKDSINALMAAVDAYIPQPPRPTDKPFLMPVEDVFSISGRGTVVTGRIETGIIKVGEEVEIIGLKDTQKTTVTGVEMFRKLLDQGEAGDNIGALIRGIKREEVERGQVLAKPGSVTPHTEFSAEVYVLSKDEGGRHTPFFANYRPQFYFRTTDVTGEVVLPEGTEMVMPGDNVTLAVKLIAPIAMDEGLRFAIREGGRTVGSGVVSKITK.

The tr-type G domain maps to 10 to 207 (KPHCNIGTIG…VDAYIPQPPR (198 aa)). A G1 region spans residues 19–26 (GHVDHGKT). Residue 19–26 (GHVDHGKT) coordinates GTP. A Mg(2+)-binding site is contributed by threonine 26. The interval 60 to 64 (GITIS) is G2. A G3 region spans residues 81-84 (DCPG). GTP contacts are provided by residues 81-85 (DCPGH) and 136-139 (NKVD). The tract at residues 136-139 (NKVD) is G4. A G5 region spans residues 174 to 176 (SAL).

The protein belongs to the TRAFAC class translation factor GTPase superfamily. Classic translation factor GTPase family. EF-Tu/EF-1A subfamily. In terms of assembly, monomer.

Its subcellular location is the cytoplasm. The catalysed reaction is GTP + H2O = GDP + phosphate + H(+). In terms of biological role, GTP hydrolase that promotes the GTP-dependent binding of aminoacyl-tRNA to the A-site of ribosomes during protein biosynthesis. The chain is Elongation factor Tu from Novosphingobium aromaticivorans (strain ATCC 700278 / DSM 12444 / CCUG 56034 / CIP 105152 / NBRC 16084 / F199).